We begin with the raw amino-acid sequence, 616 residues long: UvrABC system protein C (616 aa).

One can recognise a GIY-YIG domain in the interval 12–97; the sequence is NDAGVYQYFD…IKQLKPKYNI (86 aa). One can recognise a UVR domain in the interval 203–238; it reads TKLISKLNEKMLQYSNDFRFEEAMTLRDRIKTIEKS.

The protein belongs to the UvrC family. As to quaternary structure, interacts with UvrB in an incision complex.

The protein resides in the cytoplasm. In terms of biological role, the UvrABC repair system catalyzes the recognition and processing of DNA lesions. UvrC both incises the 5' and 3' sides of the lesion. The N-terminal half is responsible for the 3' incision and the C-terminal half is responsible for the 5' incision. The protein is UvrABC system protein C of Aliarcobacter butzleri (strain RM4018) (Arcobacter butzleri).